The sequence spans 322 residues: Picrinine-N-methytransferase (322 aa).

The SAM motif I stretch occupies residues 103–112 (MLDVGCGLGG). An SAM motif II region spans residues 166 to 174 (GTFDLVFTI). An SAM motif III region spans residues 193–202 (VAAPGAPVVI).

Belongs to the class I-like SAM-binding methyltransferase superfamily. gTMT family. Homodimer. In terms of tissue distribution, accumulates in tissues actively synthesizing monoterpenoid indole alkaloids (MIAs) (at protein level). Mainly expressed in young leaves, but barely in roots and stems.

It localises to the cytoplasm. Its subcellular location is the cytosol. It catalyses the reaction picrinine + S-adenosyl-L-methionine = ervincine + S-adenosyl-L-homocysteine + H(+). It participates in alkaloid biosynthesis; vindoline biosynthesis. Its function is as follows. S-adenosyl-L-methionine-dependent N-methyltransferase involved in the biosynthesis of biologically active monoterpenoid indole alkaloids (MIAs) natural products including vindoline. Catalyzes the conversion of picrinine to N-methylpicrinine (ervincine). Also accepts, with low efficiency, 21-hydroxycyclolochnericine and norajmaline as substrates. The polypeptide is Picrinine-N-methytransferase (Vinca minor (Common periwinkle)).